The sequence spans 176 residues: N-alpha-acetyltransferase NAT5 (176 aa).

The N-acetyltransferase domain occupies 14 to 176 (NNLGMLTKLA…DAILLKKHIS (163 aa)).

Belongs to the acetyltransferase family. As to quaternary structure, component of the N-terminal acetyltransferase A (NatA) complex, which is composed of ARD1, NAT1 and NAT5.

It localises to the cytoplasm. The enzyme catalyses N-terminal L-methionyl-L-alanyl-[protein] + acetyl-CoA = N-terminal N(alpha)-acetyl-L-methionyl-L-alanyl-[protein] + CoA + H(+). It carries out the reaction N-terminal L-methionyl-L-seryl-[protein] + acetyl-CoA = N-terminal N(alpha)-acetyl-L-methionyl-L-seryl-[protein] + CoA + H(+). The catalysed reaction is N-terminal L-methionyl-L-valyl-[protein] + acetyl-CoA = N-terminal N(alpha)-acetyl-L-methionyl-L-valyl-[protein] + CoA + H(+). It catalyses the reaction N-terminal L-methionyl-L-threonyl-[protein] + acetyl-CoA = N-terminal N(alpha)-acetyl-L-methionyl-L-threonyl-[protein] + CoA + H(+). The enzyme catalyses N-terminal L-methionyl-L-lysyl-[protein] + acetyl-CoA = N-terminal N(alpha)-acetyl-L-methionyl-L-lysyl-[protein] + CoA + H(+). It carries out the reaction N-terminal L-methionyl-L-leucyl-[protein] + acetyl-CoA = N-terminal N(alpha)-acetyl-L-methionyl-L-leucyl-[protein] + CoA + H(+). The catalysed reaction is N-terminal L-methionyl-L-phenylalanyl-[protein] + acetyl-CoA = N-terminal N(alpha)-acetyl-L-methionyl-L-phenylalanyl-[protein] + CoA + H(+). It catalyses the reaction N-terminal L-methionyl-L-tyrosyl-[protein] + acetyl-CoA = N-terminal N(alpha)-acetyl-L-methionyl-L-tyrosyl-[protein] + CoA + H(+). N-alpha-acetyltransferase that acetylates the N-terminus of proteins that retain their initiating methionine. Has a broad substrate specificity: able to acetylate the initiator methionine of most peptides. Non-essential component of the NatA N-terminal acetyltransferase. The polypeptide is N-alpha-acetyltransferase NAT5 (Saccharomyces cerevisiae (strain ATCC 204508 / S288c) (Baker's yeast)).